We begin with the raw amino-acid sequence, 395 residues long: F-box only protein 7 (395 aa).

One can recognise an F-box domain in the interval 19–70 (NHDWSKLCPDILRKIIESLSSLDFYRAKIVCSDWYSVWKTCVKRPLRPWRII).

The polypeptide is F-box only protein 7 (FBX7) (Arabidopsis thaliana (Mouse-ear cress)).